The following is a 354-amino-acid chain: Guanine nucleotide-binding protein G(i) subunit alpha-1 (354 aa).

Glycine 2 carries N-myristoyl glycine lipidation. Cysteine 3 carries the S-palmitoyl cysteine lipid modification. The region spanning 32 to 354 (REVKLLLLGA…KNNLKDCGLF (323 aa)) is the G-alpha domain. The segment at 35–48 (KLLLLGAGESGKST) is G1 motif. Residues 43–48 (ESGKST), 150–151 (DS), and 175–178 (LRTR) each bind GTP. Serine 47 serves as a coordination point for Mg(2+). A G2 motif region spans residues 173–181 (DVLRTRVKT). Residue threonine 181 coordinates Mg(2+). The interval 196-205 (FKMFDVGGQR) is G3 motif. Residues 200–204 (DVGGQ), 269–272 (NKKD), and alanine 326 each bind GTP. The G4 motif stretch occupies residues 265-272 (ILFLNKKD). Residues 324-329 (TCATDT) are G5 motif.

Belongs to the G-alpha family. G(i/o/t/z) subfamily. Heterotrimeric G proteins are composed of 3 units; alpha, beta and gamma. The alpha chain contains the guanine nucleotide binding site. Part of a spindle orientation complex. Identified in complex with the beta subunit GNB1 and the gamma subunit GNG1. Identified in complex with the beta subunit GNB1 and the gamma subunit GNG2. GTP binding causes dissociation of the heterotrimer, liberating the individual subunits so that they can interact with downstream effector proteins. Post-translationally, myristoylation at Gly-2 is required for membrane anchoring before palmitoylation. In terms of processing, palmitoylation at Cys-3 varies with membrane lipid composition.

It is found in the nucleus. The protein resides in the cytoplasm. The protein localises to the cell membrane. It localises to the cytoskeleton. Its subcellular location is the microtubule organizing center. It is found in the centrosome. The protein resides in the cell cortex. The protein localises to the membrane. It catalyses the reaction GTP + H2O = GDP + phosphate + H(+). In terms of biological role, guanine nucleotide-binding proteins (G proteins) function as transducers downstream of G protein-coupled receptors (GPCRs) in numerous signaling cascades. The alpha chain contains the guanine nucleotide binding site and alternates between an active, GTP-bound state and an inactive, GDP-bound state. Signaling by an activated GPCR promotes GDP release and GTP binding. The alpha subunit has a low GTPase activity that converts bound GTP to GDP, thereby terminating the signal. Both GDP release and GTP hydrolysis are modulated by numerous regulatory proteins. Signaling is mediated via effector proteins, such as adenylate cyclase. Inhibits adenylate cyclase activity, leading to decreased intracellular cAMP levels. Required for cortical dynein-dynactin complex recruitment during metaphase. The protein is Guanine nucleotide-binding protein G(i) subunit alpha-1 (gnai1) of Oryzias latipes (Japanese rice fish).